The following is a 749-amino-acid chain: uncharacterized protein (749 aa).

The region spanning 63–243 (FQYVQKGESI…QLTGKPMRLV (181 aa)) is the Helicase ATP-binding domain. An ATP-binding site is contributed by 76–83 (TPTASGKT). The short motif at 185–188 (DELH) is the DEVH box element. In terms of domain architecture, Helicase C-terminal spans 276–430 (EVNELAKEFL…SARINPENLI (155 aa)).

The protein belongs to the helicase family.

This is an uncharacterized protein from Bacillus subtilis (strain 168).